Reading from the N-terminus, the 1562-residue chain is DNA-directed RNA polymerase subunit beta'' (1562 aa).

Residues 1–22 are disordered; the sequence is MVKKKKFKTKNIQNPPFSSQNS. Over residues 11 to 22 the composition is skewed to polar residues; sequence NIQNPPFSSQNS. Zn(2+)-binding residues include Cys275, Cys338, Cys345, and Cys348.

The protein belongs to the RNA polymerase beta' chain family. RpoC2 subfamily. As to quaternary structure, in plastids the minimal PEP RNA polymerase catalytic core is composed of four subunits: alpha, beta, beta', and beta''. When a (nuclear-encoded) sigma factor is associated with the core the holoenzyme is formed, which can initiate transcription. Zn(2+) serves as cofactor.

It localises to the plastid. It is found in the chloroplast. The catalysed reaction is RNA(n) + a ribonucleoside 5'-triphosphate = RNA(n+1) + diphosphate. Its function is as follows. DNA-dependent RNA polymerase catalyzes the transcription of DNA into RNA using the four ribonucleoside triphosphates as substrates. This chain is DNA-directed RNA polymerase subunit beta'', found in Chlorella vulgaris (Green alga).